A 447-amino-acid polypeptide reads, in one-letter code: GTPase Der (447 aa).

EngA-type G domains lie at 3–167 (PVIA…FAER) and 181–354 (TRIA…AAAM). Residues 9–16 (GRPNVGKS), 56–60 (DTGGF), 119–122 (NKAE), 187–194 (GRPNVGKS), 234–238 (DTAGL), and 299–302 (NKWD) each bind GTP. The KH-like domain maps to 355–439 (VKLPTPKLTR…PLRIEFRTNK (85 aa)).

Belongs to the TRAFAC class TrmE-Era-EngA-EngB-Septin-like GTPase superfamily. EngA (Der) GTPase family. Associates with the 50S ribosomal subunit.

Functionally, GTPase that plays an essential role in the late steps of ribosome biogenesis. The chain is GTPase Der from Ralstonia nicotianae (strain ATCC BAA-1114 / GMI1000) (Ralstonia solanacearum).